The sequence spans 241 residues: Endothelial protein C receptor (241 aa).

An N-terminal signal peptide occupies residues 1–17; it reads MLTTLLPLLPLLLPGWA. Topologically, residues 18 to 212 are extracellular; the sequence is LCSQEASDGP…GSQTGRSYTS (195 aa). Residues Asn-49, Asn-66, Asn-138, and Asn-174 are each glycosylated (N-linked (GlcNAc...) asparagine). 2 cysteine pairs are disulfide-bonded: Cys-120–Cys-188 and Cys-221–Cys-234. A helical transmembrane segment spans residues 213 to 233; it reads LVLGVLVGCFIVTGVAVGIFL. Topologically, residues 234–241 are cytoplasmic; sequence CTGGRRRC.

In terms of tissue distribution, expressed in endothelial cells.

Its subcellular location is the membrane. Binds activated protein C. Enhances protein C activation by the thrombin-thrombomodulin complex; plays a role in the protein C pathway controlling blood coagulation. This Bos taurus (Bovine) protein is Endothelial protein C receptor (PROCR).